The primary structure comprises 332 residues: Methionyl-tRNA formyltransferase (332 aa).

Residue 124–127 (SLLP) coordinates (6S)-5,6,7,8-tetrahydrofolate.

The protein belongs to the Fmt family.

It catalyses the reaction L-methionyl-tRNA(fMet) + (6R)-10-formyltetrahydrofolate = N-formyl-L-methionyl-tRNA(fMet) + (6S)-5,6,7,8-tetrahydrofolate + H(+). Functionally, attaches a formyl group to the free amino group of methionyl-tRNA(fMet). The formyl group appears to play a dual role in the initiator identity of N-formylmethionyl-tRNA by promoting its recognition by IF2 and preventing the misappropriation of this tRNA by the elongation apparatus. This chain is Methionyl-tRNA formyltransferase, found in Polynucleobacter necessarius subsp. necessarius (strain STIR1).